We begin with the raw amino-acid sequence, 286 residues long: NADPH-dependent 7-cyano-7-deazaguanine reductase (286 aa).

Residue 92 to 94 (IES) coordinates substrate. 94-95 (SK) provides a ligand contact to NADPH. The Thioimide intermediate role is filled by Cys194. The active-site Proton donor is the Asp201. 233–234 (HE) serves as a coordination point for substrate. 262–263 (RG) serves as a coordination point for NADPH.

This sequence belongs to the GTP cyclohydrolase I family. QueF type 2 subfamily. As to quaternary structure, homodimer.

The protein resides in the cytoplasm. The catalysed reaction is 7-aminomethyl-7-carbaguanine + 2 NADP(+) = 7-cyano-7-deazaguanine + 2 NADPH + 3 H(+). It functions in the pathway tRNA modification; tRNA-queuosine biosynthesis. Its function is as follows. Catalyzes the NADPH-dependent reduction of 7-cyano-7-deazaguanine (preQ0) to 7-aminomethyl-7-deazaguanine (preQ1). This is NADPH-dependent 7-cyano-7-deazaguanine reductase from Shewanella sp. (strain MR-7).